The primary structure comprises 253 residues: Triosephosphate isomerase (253 aa).

9–11 (NWK) is a substrate binding site. His-97 serves as the catalytic Electrophile. Glu-169 functions as the Proton acceptor in the catalytic mechanism. Residues Gly-175, Ser-215, and 236–237 (GG) each bind substrate.

The protein belongs to the triosephosphate isomerase family. Homodimer.

Its subcellular location is the cytoplasm. It carries out the reaction D-glyceraldehyde 3-phosphate = dihydroxyacetone phosphate. It participates in carbohydrate biosynthesis; gluconeogenesis. It functions in the pathway carbohydrate degradation; glycolysis; D-glyceraldehyde 3-phosphate from glycerone phosphate: step 1/1. Functionally, involved in the gluconeogenesis. Catalyzes stereospecifically the conversion of dihydroxyacetone phosphate (DHAP) to D-glyceraldehyde-3-phosphate (G3P). The protein is Triosephosphate isomerase of Staphylococcus epidermidis (strain ATCC 35984 / DSM 28319 / BCRC 17069 / CCUG 31568 / BM 3577 / RP62A).